Here is a 625-residue protein sequence, read N- to C-terminus: Chromatin structure-remodeling complex subunit RSC4 (625 aa).

The disordered stretch occupies residues 1-35 (MVVKKRKLATEAGGSDERPKYLPGKHPKNQEKTPH). 2 Bromo domains span residues 53 to 158 (WHIP…VLKA) and 181 to 292 (KLVD…IQKE). Ser199 and Ser545 each carry phosphoserine. A compositionally biased stretch (polar residues) spans 536–552 (RTSNVNSNLSQPQQQEN). The segment at 536–555 (RTSNVNSNLSQPQQQENDVI) is disordered.

In terms of assembly, component of the two forms of the RSC complex composed of at least either RSC1 or RSC2, and ARP7, ARP9, LDB7, NPL6, RSC3, RSC30, RSC4, RSC58, RSC6, RSC8, RSC9, SFH1, STH1, HTL1 and probably RTT102. The complexes interact with histone and histone variant components of centromeric chromatin.

The protein resides in the nucleus. Its function is as follows. Component of the chromatin structure remodeling complex (RSC), which is involved in transcription regulation and nucleosome positioning. RSC is responsible for the transfer of a histone octamer from a nucleosome core particle to naked DNA. The reaction requires ATP and involves an activated RSC-nucleosome intermediate. Remodeling reaction also involves DNA translocation, DNA twist and conformational change. As a reconfigurer of centromeric and flanking nucleosomes, RSC complex is required both for proper kinetochore function in chromosome segregation and, via a PKC1-dependent signaling pathway, for organization of the cellular cytoskeleton. The polypeptide is Chromatin structure-remodeling complex subunit RSC4 (RSC4) (Saccharomyces cerevisiae (strain ATCC 204508 / S288c) (Baker's yeast)).